The primary structure comprises 156 residues: Transcription inhibitor protein Gfh1 (156 aa).

Residues 1 to 74 adopt a coiled-coil conformation; sequence MAREVKLTKA…LEDILSRAVI (74 aa). Glutamate 20 and glutamate 24 together coordinate Zn(2+).

This sequence belongs to the GreA/GreB family. Interacts with RNAP.

Its function is as follows. Inhibits all catalytic activities of RNA polymerase (RNAP) by partially occluding its substrate-binding site and preventing NTP binding. This chain is Transcription inhibitor protein Gfh1 (gfh1), found in Thermus thermophilus (strain ATCC 27634 / DSM 579 / HB8).